A 337-amino-acid chain; its full sequence is Dimethyladenosine transferase 1, mitochondrial (337 aa).

A mitochondrion-targeting transit peptide spans 1 to 84 (MSQVTARVLN…RSILRRQPQR (84 aa)). S-adenosyl-L-methionine contacts are provided by residues 38 to 41 (QNFL), Asn39, Leu41, Gly67, Glu89, Asp118, and Asn140.

Belongs to the class I-like SAM-binding methyltransferase superfamily. rRNA adenine N(6)-methyltransferase family. KsgA subfamily.

It is found in the mitochondrion. Its function is as follows. Probable S-adenosyl-L-methionine-dependent methyltransferase which specifically dimethylates mitochondrial 12S rRNA at the conserved stem loop. In Drosophila pseudoobscura pseudoobscura (Fruit fly), this protein is Dimethyladenosine transferase 1, mitochondrial (mtTFB1).